A 908-amino-acid polypeptide reads, in one-letter code: Protein translocase subunit SecA (908 aa).

Residues Gln87, 105-109 (GEGKT), and Asp512 contribute to the ATP site. The disordered stretch occupies residues 860-908 (AESLVGSSDEHEAVTAQAPMIRDGEKVGRNDPCPCGSGRKYKQCHGKLS). Residues Cys892, Cys894, Cys903, and His904 each contribute to the Zn(2+) site. The span at 898–908 (RKYKQCHGKLS) shows a compositional bias: basic residues.

This sequence belongs to the SecA family. Monomer and homodimer. Part of the essential Sec protein translocation apparatus which comprises SecA, SecYEG and auxiliary proteins SecDF-YajC and YidC. Zn(2+) serves as cofactor.

The protein localises to the cell inner membrane. It is found in the cytoplasm. The enzyme catalyses ATP + H2O + cellular proteinSide 1 = ADP + phosphate + cellular proteinSide 2.. Its function is as follows. Part of the Sec protein translocase complex. Interacts with the SecYEG preprotein conducting channel. Has a central role in coupling the hydrolysis of ATP to the transfer of proteins into and across the cell membrane, serving both as a receptor for the preprotein-SecB complex and as an ATP-driven molecular motor driving the stepwise translocation of polypeptide chains across the membrane. This Shewanella baltica (strain OS155 / ATCC BAA-1091) protein is Protein translocase subunit SecA.